Consider the following 268-residue polypeptide: 4-hydroxy-tetrahydrodipicolinate reductase (268 aa).

Residues 7–12 (GAGGRM) and E33 each bind NAD(+). R34 contributes to the NADP(+) binding site. Residues 97-99 (GTT) and 121-124 (SGNM) contribute to the NAD(+) site. Catalysis depends on H155, which acts as the Proton donor/acceptor. H156 serves as a coordination point for (S)-2,3,4,5-tetrahydrodipicolinate. The active-site Proton donor is the K159. A (S)-2,3,4,5-tetrahydrodipicolinate-binding site is contributed by 165–166 (GT).

The protein belongs to the DapB family.

The protein resides in the cytoplasm. It carries out the reaction (S)-2,3,4,5-tetrahydrodipicolinate + NAD(+) + H2O = (2S,4S)-4-hydroxy-2,3,4,5-tetrahydrodipicolinate + NADH + H(+). It catalyses the reaction (S)-2,3,4,5-tetrahydrodipicolinate + NADP(+) + H2O = (2S,4S)-4-hydroxy-2,3,4,5-tetrahydrodipicolinate + NADPH + H(+). It functions in the pathway amino-acid biosynthesis; L-lysine biosynthesis via DAP pathway; (S)-tetrahydrodipicolinate from L-aspartate: step 4/4. Its function is as follows. Catalyzes the conversion of 4-hydroxy-tetrahydrodipicolinate (HTPA) to tetrahydrodipicolinate. This is 4-hydroxy-tetrahydrodipicolinate reductase from Brucella abortus (strain 2308).